A 134-amino-acid chain; its full sequence is DNA-binding protein H-NS homolog (134 aa).

Residues 106-134 (HKTWTGQGRTPRPIQNALNKGKSLSDFEI) form a disordered region. Residues 112–117 (QGRTPR) mediate DNA binding.

Belongs to the histone-like protein H-NS family. Homodimer that oligomerizes on DNA into higher-order complexes that form bridges between disparate regions of DNA compacting it.

The protein resides in the cytoplasm. The protein localises to the nucleoid. A DNA-binding protein implicated in transcriptional repression and chromosome organization and compaction. Binds nucleation sites in AT-rich DNA and bridges them, forming higher-order nucleoprotein complexes and condensing the chromosome. As many horizontally transferred genes are AT-rich, it plays a central role in silencing foreign genes. A subset of genes are repressed by H-NS in association with other proteins. The chain is DNA-binding protein H-NS homolog (hns) from Haemophilus influenzae (strain ATCC 51907 / DSM 11121 / KW20 / Rd).